Consider the following 117-residue polypeptide: Large ribosomal subunit protein uL18 (117 aa).

It belongs to the universal ribosomal protein uL18 family. As to quaternary structure, part of the 50S ribosomal subunit; part of the 5S rRNA/L5/L18/L25 subcomplex. Contacts the 5S and 23S rRNAs.

Functionally, this is one of the proteins that bind and probably mediate the attachment of the 5S RNA into the large ribosomal subunit, where it forms part of the central protuberance. The protein is Large ribosomal subunit protein uL18 of Aeromonas salmonicida (strain A449).